Consider the following 90-residue polypeptide: Cell division topological specificity factor (90 aa).

Belongs to the MinE family.

Functionally, prevents the cell division inhibition by proteins MinC and MinD at internal division sites while permitting inhibition at polar sites. This ensures cell division at the proper site by restricting the formation of a division septum at the midpoint of the long axis of the cell. In Pelotomaculum thermopropionicum (strain DSM 13744 / JCM 10971 / SI), this protein is Cell division topological specificity factor.